The following is a 207-amino-acid chain: 2,3-bisphosphoglycerate-dependent phosphoglycerate mutase (207 aa).

Residues Arg-10 to Asn-17, Thr-23 to Gly-24, Arg-62, Glu-89 to Tyr-92, Lys-100, Arg-116 to Arg-117, and Gly-160 to Asn-161 each bind substrate. His-11 serves as the catalytic Tele-phosphohistidine intermediate. Glu-89 functions as the Proton donor/acceptor in the catalytic mechanism.

This sequence belongs to the phosphoglycerate mutase family. BPG-dependent PGAM subfamily. As to quaternary structure, homodimer.

It carries out the reaction (2R)-2-phosphoglycerate = (2R)-3-phosphoglycerate. The protein operates within carbohydrate degradation; glycolysis; pyruvate from D-glyceraldehyde 3-phosphate: step 3/5. Functionally, catalyzes the interconversion of 2-phosphoglycerate and 3-phosphoglycerate. The chain is 2,3-bisphosphoglycerate-dependent phosphoglycerate mutase from Bradyrhizobium sp. (strain BTAi1 / ATCC BAA-1182).